We begin with the raw amino-acid sequence, 490 residues long: Transcription factor lin-26 (490 aa).

3 disordered regions span residues Lys-96–Gln-176, Thr-236–Ser-262, and Ala-302–Arg-326. The tract at residues Ser-101–Thr-110 is PEST. Residues Ser-101–Pro-120 show a composition bias toward low complexity. 2 stretches are compositionally biased toward polar residues: residues Ala-123–Thr-132 and Asn-151–Gln-176. Positions Thr-236–Pro-260 are enriched in basic and acidic residues. The segment at Tyr-353–His-381 adopts a C2H2-type; degenerate zinc-finger fold.

As to expression, expressed in somatic gonads and germline precursors until the 50-cell stage. After the 100-cell stage, expression is seen in differentiating hypodermal and support cells (at protein level).

The protein resides in the nucleus. Probable transcription factor. Required to specify the fates of hypodermal and neuron-associated support cells. Functions during vulval development, playing a role in vulval precursor cell fate specification. Positively modulates expression of homeobox protein lin-39, perhaps by binding to regulatory regions of the lin-39 gene, acting in the vulval lineage. The sequence is that of Transcription factor lin-26 from Caenorhabditis elegans.